The following is a 438-amino-acid chain: Glutamate--tRNA ligase 2 (438 aa).

The short motif at 6–16 (PSPTGDMHTGN) is the 'HIGH' region element. The short motif at 231-235 (KMSKR) is the 'KMSKS' region element. An ATP-binding site is contributed by K234.

It belongs to the class-I aminoacyl-tRNA synthetase family. Glutamate--tRNA ligase type 1 subfamily. Monomer.

The protein resides in the cytoplasm. It catalyses the reaction tRNA(Glu) + L-glutamate + ATP = L-glutamyl-tRNA(Glu) + AMP + diphosphate. Catalyzes the attachment of glutamate to tRNA(Glu) in a two-step reaction: glutamate is first activated by ATP to form Glu-AMP and then transferred to the acceptor end of tRNA(Glu). The protein is Glutamate--tRNA ligase 2 of Wolinella succinogenes (strain ATCC 29543 / DSM 1740 / CCUG 13145 / JCM 31913 / LMG 7466 / NCTC 11488 / FDC 602W) (Vibrio succinogenes).